A 495-amino-acid chain; its full sequence is uncharacterized protein (495 aa).

Positions 1–17 (MRTLSLLILFLSTFLFA) are cleaved as a signal peptide.

This is an uncharacterized protein from Aquifex aeolicus (strain VF5).